Consider the following 87-residue polypeptide: MRKGFVKEVLSKIKYDARENEEDYYIVIEHRGTYGNIKKIPVKMITLGHGYFFIEDTQIPYHRILAVIKKDGKVVWKKRGLGDEFKF.

It belongs to the UPF0248 family.

The protein is UPF0248 protein TSIB_1445 of Thermococcus sibiricus (strain DSM 12597 / MM 739).